We begin with the raw amino-acid sequence, 417 residues long: Serine hydroxymethyltransferase 2 (417 aa).

Residues L121 and 125–127 (GHL) contribute to the (6S)-5,6,7,8-tetrahydrofolate site. K229 carries the post-translational modification N6-(pyridoxal phosphate)lysine. 354-356 (SPF) contacts (6S)-5,6,7,8-tetrahydrofolate.

It belongs to the SHMT family. Homodimer. Requires pyridoxal 5'-phosphate as cofactor.

Its subcellular location is the cytoplasm. It carries out the reaction (6R)-5,10-methylene-5,6,7,8-tetrahydrofolate + glycine + H2O = (6S)-5,6,7,8-tetrahydrofolate + L-serine. It participates in one-carbon metabolism; tetrahydrofolate interconversion. The protein operates within amino-acid biosynthesis; glycine biosynthesis; glycine from L-serine: step 1/1. Its function is as follows. Catalyzes the reversible interconversion of serine and glycine with tetrahydrofolate (THF) serving as the one-carbon carrier. This reaction serves as the major source of one-carbon groups required for the biosynthesis of purines, thymidylate, methionine, and other important biomolecules. Also exhibits THF-independent aldolase activity toward beta-hydroxyamino acids, producing glycine and aldehydes, via a retro-aldol mechanism. In Pseudomonas fluorescens (strain Pf0-1), this protein is Serine hydroxymethyltransferase 2.